A 756-amino-acid chain; its full sequence is Hyperosmolality-gated Ca2+ permeable channel 1.5 (756 aa).

A run of 10 helical transmembrane segments spans residues 7–27 (IGVA…AFAI), 101–121 (IYLL…TVMV), 154–174 (SRFW…CFVL), 373–393 (LVIA…IAFV), 425–445 (FLPG…LMLM), 465–485 (YYMF…TALQ), 510–530 (ATFF…GEIL), 574–594 (FILG…ILVF), 628–648 (VVIA…TKKA), and 651–671 (STPL…FCQG). The segment at 731–756 (PDKTPDLVATKRGSRRFNSGSAETFT) is disordered. Residues 746–756 (RFNSGSAETFT) show a composition bias toward polar residues.

It belongs to the CSC1 (TC 1.A.17) family.

It is found in the membrane. Acts as an osmosensitive calcium-permeable cation channel. The protein is Hyperosmolality-gated Ca2+ permeable channel 1.5 of Arabidopsis thaliana (Mouse-ear cress).